We begin with the raw amino-acid sequence, 1367 residues long: Flocculation protein FLO11 (1367 aa).

Positions 1–21 (MQRPFLLAYLVLSLLFNSALG) are cleaved as a signal peptide. The region spanning 31 to 207 (SSEGTSCNSI…NIDCDNNCGG (177 aa)) is the Flo11 domain. Cystine bridges form between cysteine 37–cysteine 201, cysteine 44–cysteine 179, and cysteine 141–cysteine 205. A compositionally biased stretch (low complexity) spans 209–267 (KSSTTTSSTSESSTTTSSTSESSTTTSSTSESSTTTSSTSESSTSSSTTAPATPTTTSC). Disordered stretches follow at residues 209-975 (KSST…TTSV) and 1008-1032 (TTTV…PTTP). 45 consecutive repeat copies span residues 210–219 (SSTTTSSTSE), 220–229 (SSTTTSSTSE), 230–239 (SSTTTSSTSE), 240–249 (SSTTTSSTSE), 262–274 (PTTT…KPTP), 275–287 (PTTT…KPTP), 313–327 (PVPT…SSSA), 328–342 (PVPT…SSSA), 343–354 (PVTSSTTESSSA), 355–369 (PVPT…SSSA), 370–381 (PVTSSTTESSSA), 382–393 (PVTSSTTESSSA), 394–408 (PVPT…SSSA), 409–420 (PVTSSTTESSSA), 421–432 (PVTSSTTESSSA), 433–444 (PVTSSTTESSSA), 445–456 (PVTSSTTESSSA), 457–471 (PVPT…SSSA), 472–483 (PVTSSTTESSSA), 484–498 (PVPT…SSSA), 499–510 (PVTSSTTESSSA), 511–525 (PVPT…SSSA), 526–540 (PAPT…SSSA), 541–552 (PVTSSTTESSSA), 568–579 (PVTSSTTESSSA), 580–594 (PVPT…SSSA), 595–609 (PVPT…SSSA), 610–624 (PAPT…SSSA), 625–636 (PVTSSTTESSSA), 637–651 (PVPT…SSSA), 652–666 (PVPT…SSSA), 667–681 (PVPT…SSSA), 682–693 (PVTSSTTESSSA), 694–705 (PVTSSTTESSSA), 706–720 (PVPT…SSSA), 721–735 (PVPT…SSSA), 736–750 (PVPT…SSSA), 751–762 (PVTSSTTESSSA), 763–777 (PVPT…SSSA), 778–792 (PVPT…SSSA), 808–822 (PVPT…TSSA), 838–852 (PVPT…SSSA), 865–879 (PVPT…TSSA), 937–968 (TTIT…TTVP), and 981–1012 (TTIT…TTVP). Residues 210-249 (SSTTTSSTSESSTTTSSTSESSTTTSSTSESSTTTSSTSE) are 4 X 10 AA repeats, Ser/Thr-rich. Residues 262-287 (PTTTSCTKEKPTPPTTTSCTKEKPTP) are 2 X 13 AA repeats, Thr-rich. Positions 281-292 (TKEKPTPPHHDT) are enriched in basic and acidic residues. Low complexity-rich tracts occupy residues 302–900 (TSKT…TVTP) and 910–948 (TETS…STGT). Residues 313–852 (PVPTPSSSTT…SSSTTESSSA (540 aa)) are 22 X 15 AA approximate repeats, Ser-rich. Positions 343-762 (PVTSSTTESS…TSSTTESSSA (420 aa)) are 15 X 12 AA repeats, Ser/Thr-rich. N-linked (GlcNAc...) asparagine glycosylation occurs at asparagine 817. Asparagine 874 carries an N-linked (GlcNAc...) asparagine glycan. The interval 937–1119 (TTITTTVCST…SPKTVTTTVP (183 aa)) is 3 X 32 AA tandem repeats, Thr-rich. The segment covering 949–961 (NSAGETTSGCSPK) has biased composition (polar residues). Low complexity predominate over residues 962–975 (TVTTTVPTTTTTSV). Residues 1014–1032 (STSPSETASESTTTSPTTP) are compositionally biased toward low complexity. Residues 1088 to 1119 (TTITTTVCSTGTNSAGETTSGCSPKTVTTTVP) form a 5-3 repeat. The GPI-anchor amidated glycine moiety is linked to residue glycine 1346. Positions 1347–1367 (AANIKVLGNFMWLLLALPVVF) are cleaved as a propeptide — removed in mature form.

Belongs to the flocculin family. Highly divergent. Post-translationally, extensively O-mannosylated. In terms of processing, the GPI-anchor is attached to the protein in the endoplasmic reticulum and serves to target the protein to the cell surface. There, the glucosamine-inositol phospholipid moiety is cleaved off and the GPI-modified mannoprotein is covalently attached via its lipidless GPI glycan remnant to the 1,6-beta-glucan of the outer cell wall layer. A soluble form is probably produced by proteolytic cleavage at the cell surface (shedding).

It localises to the secreted. The protein resides in the cell wall. The protein localises to the membrane. Its function is as follows. Homophilic binding protein that enables kin discrimination in heterogeneous yeast populations by mediating homotypic cell-cell interactions during flocculation, a reversible and asexual process in which cells adhere to form aggregates (flocs). Plays a role in cell-substrate adhesion, haploid invasive growth, diploid pseudohyphae formation and biofilm (flor) development. Adhesive activity is inhibited by mannose, but not by glucose, maltose, sucrose or galactose. The chain is Flocculation protein FLO11 from Saccharomyces cerevisiae (strain ATCC 204508 / S288c) (Baker's yeast).